We begin with the raw amino-acid sequence, 295 residues long: UTP--glucose-1-phosphate uridylyltransferase (295 aa).

Belongs to the UDPGP type 2 family.

It catalyses the reaction alpha-D-glucose 1-phosphate + UTP + H(+) = UDP-alpha-D-glucose + diphosphate. May play a role in stationary phase survival. This chain is UTP--glucose-1-phosphate uridylyltransferase (galU), found in Haemophilus ducreyi (strain 35000HP / ATCC 700724).